Reading from the N-terminus, the 238-residue chain is Ubiquinone biosynthesis O-methyltransferase (238 aa).

S-adenosyl-L-methionine is bound by residues R40, G59, D81, and M126.

It belongs to the methyltransferase superfamily. UbiG/COQ3 family.

It catalyses the reaction a 3-demethylubiquinol + S-adenosyl-L-methionine = a ubiquinol + S-adenosyl-L-homocysteine + H(+). The catalysed reaction is a 3-(all-trans-polyprenyl)benzene-1,2-diol + S-adenosyl-L-methionine = a 2-methoxy-6-(all-trans-polyprenyl)phenol + S-adenosyl-L-homocysteine + H(+). It functions in the pathway cofactor biosynthesis; ubiquinone biosynthesis. Functionally, O-methyltransferase that catalyzes the 2 O-methylation steps in the ubiquinone biosynthetic pathway. This chain is Ubiquinone biosynthesis O-methyltransferase, found in Neisseria meningitidis serogroup C (strain 053442).